Consider the following 198-residue polypeptide: Endonuclease V (198 aa).

Positions 38 and 101 each coordinate Mg(2+).

The protein belongs to the endonuclease V family. The cofactor is Mg(2+).

It localises to the cytoplasm. It carries out the reaction Endonucleolytic cleavage at apurinic or apyrimidinic sites to products with a 5'-phosphate.. In terms of biological role, DNA repair enzyme involved in the repair of deaminated bases. Selectively cleaves double-stranded DNA at the second phosphodiester bond 3' to a deoxyinosine leaving behind the intact lesion on the nicked DNA. The polypeptide is Endonuclease V (Saccharolobus islandicus (strain M.16.27) (Sulfolobus islandicus)).